Here is a 244-residue protein sequence, read N- to C-terminus: Thiol S-methyltransferase TMT1B (244 aa).

Residues 1 to 23 (MDVLVPLLQLLVLLLTLPLHLLA) form the signal peptide.

The protein belongs to the methyltransferase superfamily. Highly expressed in liver and kidney. No expression in testis, heart, lung, brain, spleen or cultured fibroblasts.

It is found in the endoplasmic reticulum membrane. It localises to the lipid droplet. The protein localises to the microsome. Its subcellular location is the cytoplasm. The protein resides in the cytosol. The catalysed reaction is a thiol + S-adenosyl-L-methionine = a methyl thioether + S-adenosyl-L-homocysteine + H(+). In terms of biological role, thiol S-methyltransferase that catalyzes the transfer of a methyl group from S-adenosyl-L-methionine to alkyl and phenolic thiol-containing acceptor substrates. Together with TMT1B accounts for most of S-thiol methylation activity in the endoplasmic reticulum of hepatocytes. Selectively methylates S-centered nucleophiles from metabolites such as hydrogen sulfide and dithiothreitol. The sequence is that of Thiol S-methyltransferase TMT1B (Tmt1b) from Rattus norvegicus (Rat).